Reading from the N-terminus, the 335-residue chain is V-set and immunoglobulin domain-containing protein 1 (335 aa).

A signal peptide spans 1–21; it reads MFPTMLKIFPILATLAGHVHG. The Ig-like V-type domain occupies 22 to 136; it reads VVVTVPEKTV…SQKSVIVNVL (115 aa). Residues 22–233 lie on the Extracellular side of the membrane; it reads VVVTVPEKTV…DLTSMHSDGN (212 aa). Intrachain disulfides connect Cys43-Cys115 and Cys160-Cys210. The 88-residue stretch at 139 to 226 folds into the Ig-like C2-type domain; that stretch reads PSKPFCKIEG…GNSTCELDLT (88 aa). Residues 234–254 form a helical membrane-spanning segment; that stretch reads IVAGALIGAILAAVIICAIVW. The Cytoplasmic portion of the chain corresponds to 255-335; that stretch reads VLTKKAKKKK…QKEETAGSSF (81 aa). Positions 266–335 are disordered; the sequence is SSNEMQVMAQ…QKEETAGSSF (70 aa). Over residues 268–306 the composition is skewed to polar residues; it reads NEMQVMAQKQSNAEYAQVPNEENTPATAVLPSNATNEQP. A compositionally biased stretch (basic and acidic residues) spans 319 to 335; sequence NDEKHEVQKEETAGSSF.

As to expression, expressed in thymocytes.

It localises to the membrane. This chain is V-set and immunoglobulin domain-containing protein 1 (VSIG1), found in Gallus gallus (Chicken).